The following is a 421-amino-acid chain: Histidine--tRNA ligase (421 aa).

Belongs to the class-II aminoacyl-tRNA synthetase family.

The protein localises to the cytoplasm. It carries out the reaction tRNA(His) + L-histidine + ATP = L-histidyl-tRNA(His) + AMP + diphosphate + H(+). In Pyrobaculum calidifontis (strain DSM 21063 / JCM 11548 / VA1), this protein is Histidine--tRNA ligase.